The following is a 567-amino-acid chain: MENKSQKKVSDLKLITLWIIVIFGYLLFVVEWFVIDRISGKPTGILTQSTTTLPQYSGWLSSFFTENAGQIATSSTNWTITLLRAVGSILCGVVVLKFGYRYAVLIMMGIMCVCFPFLIIGDPLNGHNQLTLLRPLSDSVKTQLSSLSSNLQVGQLLGPVMINGKTMLADGTSVELIKGLDGNSIGTAASITGYALFIIFRSTIAIGGTTLVVYTQPAIANLSSNRKKSILSNANLWGFNIGIAVVFTPFLFEQVQQVASQYWVYIMTVMILVVFANLCLFLWFESKIDHIFPQKQTKENMSLTTQPKSIDILKNKTTWKLIGVYGIVLILIVNPLTPAWFSILQTVSPSGSNGLISTGVYTTGLATLAIFWVIGYALGFVVFSPFNKTIYDKKRWMHFLLTANIVVLLIIIMFAATLGIGSAAGFALISIFSFIGGAFAWSLSSSNLILPYEFKDYKKNELPILFGFCWGFGYIAYTLFDITQSVFLQAPVLIQGKGTSILPGVIVSIVFFLGLIALANLIVKFFPACWIKDGDQLVQEMTRKWKLNEWQFVIANKQKNRYSELLK.

The next 12 helical transmembrane spans lie at 15-35 (ITLW…WFVI), 78-98 (WTIT…VLKF), 104-124 (VLIM…GDPL), 193-213 (GYAL…TLVV), 230-250 (ILSN…FTPF), 264-284 (VYIM…FLWF), 321-341 (LIGV…PAWF), 363-383 (TGLA…FVVF), 405-425 (IVVL…SAAG), 426-446 (FALI…LSSS), 462-482 (LPIL…LFDI), and 503-523 (PGVI…NLIV).

This sequence belongs to the major facilitator superfamily.

The protein resides in the cell membrane. In Mycoplasma genitalium (strain ATCC 33530 / DSM 19775 / NCTC 10195 / G37) (Mycoplasmoides genitalium), this protein is Major facilitator superfamily transporter MG061.